A 380-amino-acid chain; its full sequence is Flap endonuclease 1 (380 aa).

An N-domain region spans residues 1 to 104 (MGIHGLTKLI…AELEKRGEKR (104 aa)). Asp-34 is a binding site for Mg(2+). 2 residues coordinate DNA: Arg-47 and Arg-70. Residues Asp-86, Glu-158, Glu-160, Asp-179, and Asp-181 each coordinate Mg(2+). The tract at residues 122-253 (NIDKFSKRLV…KRAIDLIKQH (132 aa)) is I-domain. Glu-158 is a DNA binding site. Positions 231 and 233 each coordinate DNA. Asp-233 is a Mg(2+) binding site. The interaction with PCNA stretch occupies residues 336 to 344 (TQGRLDSFF). Residues 351-380 (SSKRKEPELKGSAKKKQKTGATPGKFKKGK) form a disordered region.

Belongs to the XPG/RAD2 endonuclease family. FEN1 subfamily. In terms of assembly, interacts with PCNA. Three molecules of fen1 bind to one PCNA trimer with each molecule binding to one PCNA monomer. PCNA stimulates the nuclease activity without altering cleavage specificity. The cofactor is Mg(2+). Phosphorylated. Phosphorylation upon DNA damage induces relocalization to the nuclear plasma.

The protein resides in the nucleus. It localises to the nucleolus. It is found in the nucleoplasm. The protein localises to the mitochondrion. Functionally, structure-specific nuclease with 5'-flap endonuclease and 5'-3' exonuclease activities involved in DNA replication and repair. During DNA replication, cleaves the 5'-overhanging flap structure that is generated by displacement synthesis when DNA polymerase encounters the 5'-end of a downstream Okazaki fragment. It enters the flap from the 5'-end and then tracks to cleave the flap base, leaving a nick for ligation. Also involved in the long patch base excision repair (LP-BER) pathway, by cleaving within the apurinic/apyrimidinic (AP) site-terminated flap. Acts as a genome stabilization factor that prevents flaps from equilibrating into structures that lead to duplications and deletions. Also possesses 5'-3' exonuclease activity on nicked or gapped double-stranded DNA, and exhibits RNase H activity. Also involved in replication and repair of rDNA and in repairing mitochondrial DNA. In Anoplopoma fimbria (Sablefish), this protein is Flap endonuclease 1 (fen1).